The chain runs to 432 residues: Adenylosuccinate synthetase (432 aa).

GTP-binding positions include 12-18 (GDEGKGK) and 40-42 (GHT). The Proton acceptor role is filled by aspartate 13. The Mg(2+) site is built by aspartate 13 and glycine 40. Residues 13-16 (DEGK), 38-41 (NAGH), threonine 129, arginine 143, glutamine 224, threonine 239, and arginine 303 each bind IMP. The Proton donor role is filled by histidine 41. A substrate-binding site is contributed by 299-305 (VTTGRRR). Residues arginine 305, 331 to 333 (KLD), and 413 to 415 (GVG) contribute to the GTP site.

It belongs to the adenylosuccinate synthetase family. In terms of assembly, homodimer. The cofactor is Mg(2+).

It is found in the cytoplasm. The catalysed reaction is IMP + L-aspartate + GTP = N(6)-(1,2-dicarboxyethyl)-AMP + GDP + phosphate + 2 H(+). The protein operates within purine metabolism; AMP biosynthesis via de novo pathway; AMP from IMP: step 1/2. Plays an important role in the de novo pathway of purine nucleotide biosynthesis. Catalyzes the first committed step in the biosynthesis of AMP from IMP. In Mycobacterium leprae (strain TN), this protein is Adenylosuccinate synthetase.